We begin with the raw amino-acid sequence, 400 residues long: MKRVLLTVAMLSVFFSAMFAFFPDVPKDHWAYEYVWKLWQRGIFIGYPDGEFKGDRYITRYEAATAVSRLLDFIEQKMLAGASGDLAQVVGNLSDKYMALEEKVNGLTGILDTLASQIGTTQANLTETERELLEKIDAVKEEIEMEFDKEISLNREVVNNIGLKLGNLSRDYERYKENVDAKISEVNEKLAALEKDLGNKIADLEGIVNLHEKDIINIYNKISSVNEELNNKIAATEEKLSRKDEEISAMVELHEKDIINLYNKVAALNEDLNKKILDTKAELSAKIESQEKTLNMVYTKLLDTESKLNDEISALKEKDAEIQKTVDLHEQDIVNLYGKTSSLEEDLNMKYNETNEKIDQVKAELEDKIESVKAYNRNLSILTGAFFGILGLILIAISGK.

An N-terminal signal peptide occupies residues Met-1–Ala-20. The SLH domain occupies Phe-21–Gly-81. Residues Asp-85–Leu-379 adopt a coiled-coil conformation. A run of 3 repeats spans residues Val-208–Lys-232, Val-251–Lys-275, and Val-326–Lys-350. Positions Val-208 to Lys-350 are 3 X 25 AA approximate repeat. A helical membrane pass occupies residues Ser-380–Lys-400.

As to quaternary structure, homotetramer.

The protein resides in the cell outer membrane. In terms of biological role, links the outer membrane to the inner membrane. Long fibrous protein that could serve to separate the two membranes. This chain is Outer membrane protein alpha (omp-alpha), found in Thermotoga maritima (strain ATCC 43589 / DSM 3109 / JCM 10099 / NBRC 100826 / MSB8).